The chain runs to 163 residues: 2,3-dimethylmalate dehydratase small subunit (163 aa).

The protein belongs to the LeuD family. LeuD type 2 subfamily. As to quaternary structure, heterodimer of a large and a small subunit.

The catalysed reaction is (2R,3S)-2,3-dimethylmalate = dimethylmaleate + H2O. It participates in cofactor degradation; nicotinate degradation; propanoate and pyruvate from 6-hydroxynicotinate: step 7/8. The sequence is that of 2,3-dimethylmalate dehydratase small subunit from Eubacterium barkeri (Clostridium barkeri).